The primary structure comprises 240 residues: Predicted GPI-anchored protein 58 (240 aa).

A signal peptide spans 1-18 (MQFSTLVSLAAVIVSTNA). The interval 41–216 (HTNCPASSPA…NSTGPSSVPT (176 aa)) is disordered. The span at 51–86 (TPAPAPSASAPAPPAPEQPEPSAPAPAPSAPAPEQP) shows a compositional bias: pro residues. Over residues 87 to 103 (EQPATPATPAAPATPAT) the composition is skewed to low complexity. 2 stretches are compositionally biased toward pro residues: residues 104-137 (PAAPEPSAPAPEQPASPAAPAPAPSAPAPAPEQP) and 153-192 (APAPSAPAPPAPEQPESAPAPAPSAPAPEQPESSPAPAPS). Positions 193 to 216 (APASVPEQPASSVSNSTGPSSVPT) are enriched in low complexity. An N-linked (GlcNAc...) asparagine glycan is attached at Asn-207. Residue Gly-219 is the site of GPI-anchor amidated glycine attachment. A propeptide spans 220–240 (AAAKQYITGSVAVIAAALLAL) (removed in mature form).

The protein localises to the cell membrane. This is Predicted GPI-anchored protein 58 (PGA58) from Candida albicans (strain SC5314 / ATCC MYA-2876) (Yeast).